Reading from the N-terminus, the 133-residue chain is Ribosome-binding factor A (133 aa).

It belongs to the RbfA family. As to quaternary structure, monomer. Binds 30S ribosomal subunits, but not 50S ribosomal subunits or 70S ribosomes.

The protein localises to the cytoplasm. In terms of biological role, one of several proteins that assist in the late maturation steps of the functional core of the 30S ribosomal subunit. Associates with free 30S ribosomal subunits (but not with 30S subunits that are part of 70S ribosomes or polysomes). Required for efficient processing of 16S rRNA. May interact with the 5'-terminal helix region of 16S rRNA. This chain is Ribosome-binding factor A, found in Pseudomonas fluorescens (strain ATCC BAA-477 / NRRL B-23932 / Pf-5).